A 122-amino-acid polypeptide reads, in one-letter code: Large ribosomal subunit protein uL14 (122 aa).

It belongs to the universal ribosomal protein uL14 family. In terms of assembly, part of the 50S ribosomal subunit. Forms a cluster with proteins L3 and L19. In the 70S ribosome, L14 and L19 interact and together make contacts with the 16S rRNA in bridges B5 and B8.

Its function is as follows. Binds to 23S rRNA. Forms part of two intersubunit bridges in the 70S ribosome. The protein is Large ribosomal subunit protein uL14 of Desulforamulus reducens (strain ATCC BAA-1160 / DSM 100696 / MI-1) (Desulfotomaculum reducens).